The sequence spans 224 residues: RNA-binding protein 24-B (224 aa).

The RRM domain maps to Thr-11 to Leu-88.

The protein resides in the nucleus. It is found in the cytoplasm. Multifunctional RNA-binding protein involved in the regulation of pre-mRNA splicing, mRNA stability and mRNA translation important for cell fate decision and differentiation. Plays a major role in pre-mRNA alternative splicing regulation. Mediates preferentially muscle-specific exon inclusion in numerous mRNAs important for striated cardiac and skeletal muscle cell differentiation. Binds to intronic splicing enhancer (ISE) composed of stretches of GU-rich motifs localized in flanking intron of exon that will be included by alternative splicing. Involved in embryonic stem cell (ESC) transition to cardiac cell differentiation by promoting pre-mRNA alternative splicing events of several pluripotency and/or differentiation genes. Plays a role in the regulation of mRNA stability and mRNA translation to which it is bound. Involved in myogenic differentiation by regulating myog levels. Binds to a huge amount of mRNAs. Required for embryonic heart development, sarcomer and M-band formation in striated muscles. This chain is RNA-binding protein 24-B (rbm24-b), found in Xenopus laevis (African clawed frog).